We begin with the raw amino-acid sequence, 258 residues long: Proteasome subunit alpha (258 aa).

Belongs to the peptidase T1A family. The 20S proteasome core is composed of 14 alpha and 14 beta subunits that assemble into four stacked heptameric rings, resulting in a barrel-shaped structure. The two inner rings, each composed of seven catalytic beta subunits, are sandwiched by two outer rings, each composed of seven alpha subunits. The catalytic chamber with the active sites is on the inside of the barrel. Has a gated structure, the ends of the cylinder being occluded by the N-termini of the alpha-subunits. Is capped by the proteasome-associated ATPase, ARC.

The protein resides in the cytoplasm. It participates in protein degradation; proteasomal Pup-dependent pathway. The formation of the proteasomal ATPase ARC-20S proteasome complex, likely via the docking of the C-termini of ARC into the intersubunit pockets in the alpha-rings, may trigger opening of the gate for substrate entry. Interconversion between the open-gate and close-gate conformations leads to a dynamic regulation of the 20S proteasome proteolysis activity. Its function is as follows. Component of the proteasome core, a large protease complex with broad specificity involved in protein degradation. The sequence is that of Proteasome subunit alpha from Nocardia farcinica (strain IFM 10152).